The following is a 331-amino-acid chain: Vacuolar protein sorting-associated protein 26B (331 aa).

Residues 310–331 (AAQRYEGSNPEPTSAQAKEETD) form a disordered region.

This sequence belongs to the VPS26 family. In terms of assembly, component of the heterotrimeric retromer cargo-selective complex (CSC) which is believed to associate with variable sorting nexins to form functionally distinct retromer complex variants.

It localises to the cytoplasm. It is found in the membrane. The protein resides in the endosome. Acts as a component of the retromer cargo-selective complex (CSC). The CSC is believed to be the core functional component of retromer or respective retromer complex variants acting to prevent missorting of selected transmembrane cargo proteins into the lysosomal degradation pathway. Retromer mediates retrograde transport of cargo proteins from endosomes to the trans-Golgi network (TGN). This chain is Vacuolar protein sorting-associated protein 26B (vps26b), found in Danio rerio (Zebrafish).